Consider the following 543-residue polypeptide: Chaperonin GroEL 1 (543 aa).

ATP contacts are provided by residues 30-33, lysine 51, 87-91, glycine 415, and aspartate 496; these read TLGP and DGTTT.

Belongs to the chaperonin (HSP60) family. Forms a cylinder of 14 subunits composed of two heptameric rings stacked back-to-back. Interacts with the co-chaperonin GroES.

It is found in the cytoplasm. The catalysed reaction is ATP + H2O + a folded polypeptide = ADP + phosphate + an unfolded polypeptide.. Functionally, together with its co-chaperonin GroES, plays an essential role in assisting protein folding. The GroEL-GroES system forms a nano-cage that allows encapsulation of the non-native substrate proteins and provides a physical environment optimized to promote and accelerate protein folding. The chain is Chaperonin GroEL 1 from Roseobacter denitrificans (strain ATCC 33942 / OCh 114) (Erythrobacter sp. (strain OCh 114)).